The chain runs to 662 residues: Probable lysophospholipase 3 (662 aa).

Positions 1-19 (MLFNCFGILALLQILPALA) are cleaved as a signal peptide. Residues Asn-74, Asn-127, Asn-162, Asn-196, Asn-266, Asn-274, Asn-303, Asn-376, Asn-406, Asn-411, Asn-483, Asn-518, Asn-523, Asn-547, Asn-556, Asn-574, Asn-596, and Asn-613 are each glycosylated (N-linked (GlcNAc...) asparagine). The PLA2c domain maps to 76 to 617 (TCPSDYMLRP…EQYCWNGTTV (542 aa)).

It belongs to the lysophospholipase family.

The protein resides in the secreted. The enzyme catalyses a 1-acyl-sn-glycero-3-phosphocholine + H2O = sn-glycerol 3-phosphocholine + a fatty acid + H(+). Catalyzes the release of fatty acids from lysophospholipids. In Schizosaccharomyces pombe (strain 972 / ATCC 24843) (Fission yeast), this protein is Probable lysophospholipase 3 (plb3).